Reading from the N-terminus, the 743-residue chain is Inhibitor of nuclear factor kappa-B kinase subunit alpha (743 aa).

One can recognise a Protein kinase domain in the interval 15–300 (WDMKDRLGTG…IDCGRPRCFM (286 aa)). ATP is bound by residues 21 to 29 (LGTGGFGNV) and lysine 44. Catalysis depends on aspartate 144, which acts as the Proton acceptor. Residues 453–474 (LLRFNTNLTKMKNTMVSASQQL) form a leucine-zipper region. The segment at 736-741 (MDFSWL) is NEMO-binding.

This sequence belongs to the protein kinase superfamily. Ser/Thr protein kinase family. I-kappa-B kinase subfamily.

Its subcellular location is the cytoplasm. The protein localises to the nucleus. It catalyses the reaction L-seryl-[I-kappa-B protein] + ATP = O-phospho-L-seryl-[I-kappa-B protein] + ADP + H(+). Activated when phosphorylated and inactivated when dephosphorylated. In terms of biological role, phosphorylates inhibitors of NF-kappa-B thus leading to the dissociation of the inhibitor/NF-kappa-B complex and ultimately the degradation of the inhibitor. Phosphorylates 'Ser-10' of histone H3 at NF-kappa-B-regulated promoters during inflammatory responses triggered by cytokines. This chain is Inhibitor of nuclear factor kappa-B kinase subunit alpha (chuk), found in Xenopus laevis (African clawed frog).